Here is a 212-residue protein sequence, read N- to C-terminus: Anaphase-promoting complex subunit 10 (212 aa).

The region spanning 12 to 196 (MDEEERTSSR…PSAVLEARPG (185 aa)) is the DOC domain.

This sequence belongs to the APC10 family. The APC/C complex is probably composed of at least 12 subunits: apc-2, apc-10, apc-11, cdc-26, emb-1, emb-27, emb-30, mat-1, mat-2, mat-3, such-1 and gfi-3.

Its pathway is protein modification; protein ubiquitination. Its function is as follows. Probable component of the anaphase promoting complex/cyclosome (APC/C), a cell cycle-regulated E3 ubiquitin ligase that controls progression through mitosis and the G1 phase of the cell cycle. The APC/C complex acts by mediating ubiquitination and subsequent degradation of target proteins. This chain is Anaphase-promoting complex subunit 10, found in Caenorhabditis elegans.